We begin with the raw amino-acid sequence, 817 residues long: Leucine--tRNA ligase (817 aa).

Residues 42 to 52 carry the 'HIGH' region motif; that stretch reads PYPSGRLHMGH. The 'KMSKS' region motif lies at 576-580; it reads KMSKS. Lys579 contacts ATP.

The protein belongs to the class-I aminoacyl-tRNA synthetase family.

It localises to the cytoplasm. It carries out the reaction tRNA(Leu) + L-leucine + ATP = L-leucyl-tRNA(Leu) + AMP + diphosphate. This is Leucine--tRNA ligase from Halorhodospira halophila (strain DSM 244 / SL1) (Ectothiorhodospira halophila (strain DSM 244 / SL1)).